A 353-amino-acid polypeptide reads, in one-letter code: Photosystem II protein D1 (353 aa).

The residue at position 2 (T2) is an N-acetylthreonine. T2 carries the phosphothreonine modification. Helical transmembrane passes span 29–46 (YIGW…TATS), 118–133 (HFLL…EWEL), and 142–156 (WIAV…AATA). H118 serves as a coordination point for chlorophyll a. Y126 lines the pheophytin a pocket. [CaMn4O5] cluster contacts are provided by D170 and E189. A helical membrane pass occupies residues 197–218 (FHMLGVAGVFGGSLFSAMHGSL). Residue H198 participates in chlorophyll a binding. A quinone is bound by residues H215 and 264-265 (SF). H215 serves as a coordination point for Fe cation. H272 contributes to the Fe cation binding site. Residues 274 to 288 (FLAAWPVVGIWFTAL) form a helical membrane-spanning segment. [CaMn4O5] cluster-binding residues include H332, E333, D342, and A344. A propeptide spanning residues 345-353 (AIEAPATNG) is cleaved from the precursor.

This sequence belongs to the reaction center PufL/M/PsbA/D family. PSII is composed of 1 copy each of membrane proteins PsbA, PsbB, PsbC, PsbD, PsbE, PsbF, PsbH, PsbI, PsbJ, PsbK, PsbL, PsbM, PsbT, PsbX, PsbY, PsbZ, Psb30/Ycf12, at least 3 peripheral proteins of the oxygen-evolving complex and a large number of cofactors. It forms dimeric complexes. The D1/D2 heterodimer binds P680, chlorophylls that are the primary electron donor of PSII, and subsequent electron acceptors. It shares a non-heme iron and each subunit binds pheophytin, quinone, additional chlorophylls, carotenoids and lipids. D1 provides most of the ligands for the Mn4-Ca-O5 cluster of the oxygen-evolving complex (OEC). There is also a Cl(-1) ion associated with D1 and D2, which is required for oxygen evolution. The PSII complex binds additional chlorophylls, carotenoids and specific lipids. serves as cofactor. In terms of processing, tyr-161 forms a radical intermediate that is referred to as redox-active TyrZ, YZ or Y-Z. C-terminally processed by CTPA; processing is essential to allow assembly of the oxygen-evolving complex and thus photosynthetic growth.

Its subcellular location is the plastid membrane. The catalysed reaction is 2 a plastoquinone + 4 hnu + 2 H2O = 2 a plastoquinol + O2. In terms of biological role, photosystem II (PSII) is a light-driven water:plastoquinone oxidoreductase that uses light energy to abstract electrons from H(2)O, generating O(2) and a proton gradient subsequently used for ATP formation. It consists of a core antenna complex that captures photons, and an electron transfer chain that converts photonic excitation into a charge separation. The D1/D2 (PsbA/PsbD) reaction center heterodimer binds P680, the primary electron donor of PSII as well as several subsequent electron acceptors. This is Photosystem II protein D1 from Cuscuta exaltata (Tall dodder).